A 226-amino-acid chain; its full sequence is N-(5'-phosphoribosyl)anthranilate isomerase (226 aa).

Belongs to the TrpF family.

The catalysed reaction is N-(5-phospho-beta-D-ribosyl)anthranilate = 1-(2-carboxyphenylamino)-1-deoxy-D-ribulose 5-phosphate. It functions in the pathway amino-acid biosynthesis; L-tryptophan biosynthesis; L-tryptophan from chorismate: step 3/5. The protein is N-(5'-phosphoribosyl)anthranilate isomerase (TRP1) of Candida albicans (strain SC5314 / ATCC MYA-2876) (Yeast).